Consider the following 163-residue polypeptide: Nucleotide-binding protein NT01EI_1072 (163 aa).

This sequence belongs to the YajQ family.

Nucleotide-binding protein. The polypeptide is Nucleotide-binding protein NT01EI_1072 (Edwardsiella ictaluri (strain 93-146)).